Consider the following 422-residue polypeptide: Glutamate 2,3-aminomutase (422 aa).

In terms of domain architecture, Radical SAM core spans 150 to 371 (RRYPDRLIIN…AIPTYIVNAP (222 aa)). Cys164, Cys168, and Cys171 together coordinate [4Fe-4S] cluster. The residue at position 376 (Lys376) is an N6-(pyridoxal phosphate)lysine.

Belongs to the radical SAM superfamily. Pyridoxal 5'-phosphate serves as cofactor. The cofactor is [4Fe-4S] cluster.

The catalysed reaction is L-glutamate = 3-aminopentanedioate. In terms of biological role, catalyzes the interconversion of L-glutamate and L-beta-glutamate. Does not have L-lysine 2,3-aminomutase activity. This is Glutamate 2,3-aminomutase (eam) from Clostridioides difficile (strain 630) (Peptoclostridium difficile).